Consider the following 203-residue polypeptide: GTP cyclohydrolase-2 (203 aa).

Residue 49–53 participates in GTP binding; sequence RIHSE. The Zn(2+) site is built by Cys54, Cys65, and Cys67. GTP is bound by residues Gln70, 92–94, and Thr114; that span reads EGR. Residue Asp126 is the Proton acceptor of the active site. Arg128 functions as the Nucleophile in the catalytic mechanism. GTP contacts are provided by Thr149 and Lys154.

The protein belongs to the GTP cyclohydrolase II family. Zn(2+) is required as a cofactor.

The catalysed reaction is GTP + 4 H2O = 2,5-diamino-6-hydroxy-4-(5-phosphoribosylamino)-pyrimidine + formate + 2 phosphate + 3 H(+). Its pathway is cofactor biosynthesis; riboflavin biosynthesis; 5-amino-6-(D-ribitylamino)uracil from GTP: step 1/4. Its function is as follows. Catalyzes the conversion of GTP to 2,5-diamino-6-ribosylamino-4(3H)-pyrimidinone 5'-phosphate (DARP), formate and pyrophosphate. In Shewanella sp. (strain MR-4), this protein is GTP cyclohydrolase-2.